We begin with the raw amino-acid sequence, 204 residues long: Lymphotoxin-alpha (204 aa).

Residues 1–33 form the signal peptide; that stretch reads MTPPGRLYLRRVCSTPILLLLGLLLALPPEAQG. One can recognise a THD domain in the interval 62–204; the sequence is PAAHLVGDPS…SSVFFGAFAL (143 aa). Asparagine 95 carries N-linked (GlcNAc...) asparagine glycosylation. Cysteine 119 and cysteine 155 form a disulfide bridge.

Belongs to the tumor necrosis factor family. In terms of assembly, homotrimer, and heterotrimer of either two LTB and one LTA subunits or (less prevalent) two LTA and one LTB subunits. Interacts with TNFRSF14.

It localises to the secreted. The protein localises to the membrane. Functionally, cytokine that in its homotrimeric form binds to TNFRSF1A/TNFR1, TNFRSF1B/TNFBR and TNFRSF14/HVEM. In its heterotrimeric form with LTB binds to TNFRSF3/LTBR. Lymphotoxin is produced by lymphocytes and is cytotoxic for a wide range of tumor cells in vitro and in vivo. This Sus scrofa (Pig) protein is Lymphotoxin-alpha (LTA).